We begin with the raw amino-acid sequence, 388 residues long: Succinate--CoA ligase [ADP-forming] subunit beta (388 aa).

The 236-residue stretch at 9–244 folds into the ATP-grasp domain; the sequence is KEILRKFGVA…LDEEDPAEIE (236 aa). Residues Lys46, 53-55, Glu99, Ala102, and Glu107 each bind ATP; that span reads GRG. The Mg(2+) site is built by Asn199 and Asp213. Residues Asn264 and 321-323 each bind substrate; that span reads GIM.

The protein belongs to the succinate/malate CoA ligase beta subunit family. In terms of assembly, heterotetramer of two alpha and two beta subunits. It depends on Mg(2+) as a cofactor.

It catalyses the reaction succinate + ATP + CoA = succinyl-CoA + ADP + phosphate. The catalysed reaction is GTP + succinate + CoA = succinyl-CoA + GDP + phosphate. Its pathway is carbohydrate metabolism; tricarboxylic acid cycle; succinate from succinyl-CoA (ligase route): step 1/1. Its function is as follows. Succinyl-CoA synthetase functions in the citric acid cycle (TCA), coupling the hydrolysis of succinyl-CoA to the synthesis of either ATP or GTP and thus represents the only step of substrate-level phosphorylation in the TCA. The beta subunit provides nucleotide specificity of the enzyme and binds the substrate succinate, while the binding sites for coenzyme A and phosphate are found in the alpha subunit. The chain is Succinate--CoA ligase [ADP-forming] subunit beta from Burkholderia lata (strain ATCC 17760 / DSM 23089 / LMG 22485 / NCIMB 9086 / R18194 / 383).